Reading from the N-terminus, the 344-residue chain is AA9 family lytic polysaccharide monooxygenase J (344 aa).

Residues 1-20 form the signal peptide; sequence MKSSLLVVLTAGLAVRDAIA. Residues histidine 21 and histidine 99 each coordinate Cu(2+). Cysteine 58 and cysteine 194 are oxidised to a cystine. Histidine 180 and glutamine 189 together coordinate O2. Residue tyrosine 191 coordinates Cu(2+). Residues 272–301 form a disordered region; sequence PGGKPASGGSDGNAPEVAEPSGGEGSPSAP. A compositionally biased stretch (low complexity) spans 285 to 301; that stretch reads APEVAEPSGGEGSPSAP. In terms of domain architecture, CBM1 spans 304–341; it reads CEVAAYGQCGGDQYSGCTQCASGYTCKAVSPPYYSQCA.

The protein belongs to the polysaccharide monooxygenase AA9 family. Cu(2+) serves as cofactor.

The protein localises to the secreted. The catalysed reaction is [(1-&gt;4)-beta-D-glucosyl]n+m + reduced acceptor + O2 = 4-dehydro-beta-D-glucosyl-[(1-&gt;4)-beta-D-glucosyl]n-1 + [(1-&gt;4)-beta-D-glucosyl]m + acceptor + H2O.. Its function is as follows. Lytic polysaccharide monooxygenase (LPMO) that depolymerizes crystalline and amorphous polysaccharides via the oxidation of scissile alpha- or beta-(1-4)-glycosidic bonds, yielding C4 oxidation products. Catalysis by LPMOs requires the reduction of the active-site copper from Cu(II) to Cu(I) by a reducing agent and H(2)O(2) or O(2) as a cosubstrate. The chain is AA9 family lytic polysaccharide monooxygenase J (gh61-10) from Neurospora crassa (strain ATCC 24698 / 74-OR23-1A / CBS 708.71 / DSM 1257 / FGSC 987).